The primary structure comprises 222 residues: Probable pyridoxal 5'-phosphate synthase subunit SNO3 (222 aa).

58-60 is an L-glutamine binding site; that stretch reads GES. Cys-91 acts as the Nucleophile in catalysis. L-glutamine contacts are provided by residues Arg-120 and 151–152; that span reads IR. Active-site charge relay system residues include His-197 and Glu-199.

It belongs to the glutaminase PdxT/SNO family.

The enzyme catalyses aldehydo-D-ribose 5-phosphate + D-glyceraldehyde 3-phosphate + L-glutamine = pyridoxal 5'-phosphate + L-glutamate + phosphate + 3 H2O + H(+). The catalysed reaction is L-glutamine + H2O = L-glutamate + NH4(+). It participates in cofactor biosynthesis; pyridoxal 5'-phosphate biosynthesis. Functionally, catalyzes the hydrolysis of glutamine to glutamate and ammonia as part of the biosynthesis of pyridoxal 5'-phosphate. The resulting ammonia molecule is channeled to the active site of a SNZ isoform. This is Probable pyridoxal 5'-phosphate synthase subunit SNO3 (SNO3) from Saccharomyces cerevisiae (strain ATCC 204508 / S288c) (Baker's yeast).